The sequence spans 372 residues: Carbamoyl phosphate synthase small chain (372 aa).

The tract at residues Met-1–Ile-186 is CPSase. Residues Ser-52, Gly-233, and Gly-235 each coordinate L-glutamine. Positions Ile-185 to Asn-372 constitute a Glutamine amidotransferase type-1 domain. Catalysis depends on Cys-261, which acts as the Nucleophile. L-glutamine contacts are provided by Leu-262, Gln-265, Asn-303, Gly-305, and Tyr-306. Catalysis depends on residues His-345 and Glu-347.

The protein belongs to the CarA family. As to quaternary structure, composed of two chains; the small (or glutamine) chain promotes the hydrolysis of glutamine to ammonia, which is used by the large (or ammonia) chain to synthesize carbamoyl phosphate. Tetramer of heterodimers (alpha,beta)4.

The enzyme catalyses hydrogencarbonate + L-glutamine + 2 ATP + H2O = carbamoyl phosphate + L-glutamate + 2 ADP + phosphate + 2 H(+). It catalyses the reaction L-glutamine + H2O = L-glutamate + NH4(+). It functions in the pathway amino-acid biosynthesis; L-arginine biosynthesis; carbamoyl phosphate from bicarbonate: step 1/1. Its pathway is pyrimidine metabolism; UMP biosynthesis via de novo pathway; (S)-dihydroorotate from bicarbonate: step 1/3. In terms of biological role, small subunit of the glutamine-dependent carbamoyl phosphate synthetase (CPSase). CPSase catalyzes the formation of carbamoyl phosphate from the ammonia moiety of glutamine, carbonate, and phosphate donated by ATP, constituting the first step of 2 biosynthetic pathways, one leading to arginine and/or urea and the other to pyrimidine nucleotides. The small subunit (glutamine amidotransferase) binds and cleaves glutamine to supply the large subunit with the substrate ammonia. The chain is Carbamoyl phosphate synthase small chain from Metallosphaera sedula (strain ATCC 51363 / DSM 5348 / JCM 9185 / NBRC 15509 / TH2).